A 287-amino-acid polypeptide reads, in one-letter code: Cbb3-type cytochrome c oxidase subunit FixPc (287 aa).

Over 1–36 the chain is Cytoplasmic; that stretch reads MSEKHIDEFSGVETTGHEWDGIRELNNPMPRWWVWT. A helical membrane pass occupies residues 37 to 57; sequence FYATIVWALGYAIAYPAIPMI. Residues 58-287 lie on the Periplasmic side of the membrane; that stretch reads TDATKGMLGF…IFVHSLGGGT (230 aa). Cytochrome c domains follow at residues 108–196 and 203–284; these read FAIA…WGLT and GLAE…HSLG. Heme c is bound by residues C121, C124, H125, M173, C216, C219, H220, and M261.

The protein belongs to the CcoP / FixP family. In terms of assembly, component of the cbb3-type cytochrome c oxidase at least composed of FixN, FixO, FixQ and FixP. The cofactor is heme c.

It localises to the cell inner membrane. It functions in the pathway energy metabolism; oxidative phosphorylation. C-type cytochrome. Part of the cbb3-type cytochrome c oxidase complex. FixP subunit is required for transferring electrons from donor cytochrome c via its heme groups to FixO subunit. From there, electrons are shuttled to the catalytic binuclear center of FixN subunit where oxygen reduction takes place. The complex also functions as a proton pump. This is Cbb3-type cytochrome c oxidase subunit FixPc from Rhizobium leguminosarum bv. viciae.